A 592-amino-acid polypeptide reads, in one-letter code: 2-succinyl-5-enolpyruvyl-6-hydroxy-3-cyclohexene-1-carboxylate synthase (592 aa).

Belongs to the TPP enzyme family. MenD subfamily. In terms of assembly, homodimer. Mg(2+) is required as a cofactor. It depends on Mn(2+) as a cofactor. Requires thiamine diphosphate as cofactor.

The catalysed reaction is isochorismate + 2-oxoglutarate + H(+) = 5-enolpyruvoyl-6-hydroxy-2-succinyl-cyclohex-3-ene-1-carboxylate + CO2. The protein operates within quinol/quinone metabolism; 1,4-dihydroxy-2-naphthoate biosynthesis; 1,4-dihydroxy-2-naphthoate from chorismate: step 2/7. Its pathway is quinol/quinone metabolism; menaquinone biosynthesis. In terms of biological role, catalyzes the thiamine diphosphate-dependent decarboxylation of 2-oxoglutarate and the subsequent addition of the resulting succinic semialdehyde-thiamine pyrophosphate anion to isochorismate to yield 2-succinyl-5-enolpyruvyl-6-hydroxy-3-cyclohexene-1-carboxylate (SEPHCHC). This Haloarcula marismortui (strain ATCC 43049 / DSM 3752 / JCM 8966 / VKM B-1809) (Halobacterium marismortui) protein is 2-succinyl-5-enolpyruvyl-6-hydroxy-3-cyclohexene-1-carboxylate synthase.